We begin with the raw amino-acid sequence, 286 residues long: 33 kDa chaperonin (286 aa).

Cystine bridges form between Cys225/Cys227 and Cys258/Cys261.

Belongs to the HSP33 family. In terms of processing, under oxidizing conditions two disulfide bonds are formed involving the reactive cysteines. Under reducing conditions zinc is bound to the reactive cysteines and the protein is inactive.

The protein resides in the cytoplasm. Redox regulated molecular chaperone. Protects both thermally unfolding and oxidatively damaged proteins from irreversible aggregation. Plays an important role in the bacterial defense system toward oxidative stress. This is 33 kDa chaperonin from Shewanella putrefaciens (strain CN-32 / ATCC BAA-453).